An 813-amino-acid chain; its full sequence is Disintegrin and metalloproteinase domain-containing protein 33 (813 aa).

A signal peptide spans 1–29; that stretch reads MGWRPRRARGTPLLLLLLLLLLWPVPGAG. The propeptide occupies 30–203; that stretch reads VLQGHIPGQP…PGGPQSRGRR (174 aa). Residues 30–701 lie on the Extracellular side of the membrane; sequence VLQGHIPGQP…GPVQAENHDT (672 aa). N-linked (GlcNAc...) asparagine glycosylation occurs at Asn109. The short motif at 131 to 138 is the Cysteine switch element; sequence CTCSGMSG. Residue Cys133 participates in Zn(2+) binding. Residue Asn145 is glycosylated (N-linked (GlcNAc...) asparagine). The interval 184 to 205 is disordered; the sequence is PGNKAGMTSLPGGPQSRGRREA. The Peptidase M12B domain occupies 210 to 409; the sequence is KYLELYIVAD…GGGACLSNAP (200 aa). Asn231 and Asn276 each carry an N-linked (GlcNAc...) asparagine glycan. Disulfide bonds link Cys320–Cys404, Cys360–Cys388, and Cys361–Cys371. Residue His345 coordinates Zn(2+). Glu346 is a catalytic residue. Residues His349 and His355 each coordinate Zn(2+). The Disintegrin domain occupies 417–503; that stretch reads PALCGNGFVE…HCPPDVYLLD (87 aa). A glycan (N-linked (GlcNAc...) asparagine) is linked at Asn448. Intrachain disulfides connect Cys475–Cys495, Cys653–Cys663, Cys657–Cys669, and Cys671–Cys680. One can recognise an EGF-like domain in the interval 649–681; the sequence is ELQRCLTACHSHGVCNSNHNCHCAPGWAPPFCD. Residues 702–722 traverse the membrane as a helical segment; that stretch reads FLLAMLLSVLLPLLPGAGLAW. Residues 723-813 are Cytoplasmic-facing; sequence CCYRLPGAHL…QVQMPRSCLW (91 aa). The disordered stretch occupies residues 746-813; the sequence is SGPKDGPHRD…QVQMPRSCLW (68 aa). The segment covering 780-791 has biased composition (basic and acidic residues); the sequence is ENSHEPSSHPEK.

Zn(2+) is required as a cofactor. Post-translationally, the precursor is cleaved by a furin endopeptidase. In terms of tissue distribution, expressed in all tissues, except liver, with high expression in placenta, lung, spleen and veins.

Its subcellular location is the membrane. This is Disintegrin and metalloproteinase domain-containing protein 33 (ADAM33) from Homo sapiens (Human).